The chain runs to 183 residues: uncharacterized protein (183 aa).

4 helical membrane passes run 13 to 35 (KALL…LTYS), 60 to 82 (LLIL…KLRF), 117 to 139 (FEPV…YAIF), and 149 to 171 (LLFY…LYLS).

It localises to the cell membrane. This is an uncharacterized protein from Archaeoglobus fulgidus (strain ATCC 49558 / DSM 4304 / JCM 9628 / NBRC 100126 / VC-16).